The sequence spans 291 residues: G1/S-specific cyclin-D1 (291 aa).

A Phosphothreonine modification is found at T282.

This sequence belongs to the cyclin family. Cyclin D subfamily. Interacts with the CDK4 and CDK6 protein kinases to form a serine/threonine kinase holoenzyme complex. The cyclin subunit imparts substrate specificity to the complex. In terms of processing, phosphorylation at Thr-282 by MAP kinases is required for ubiquitination and degradation by the DCX(AMBRA1) complex. Ubiquitinated by the DCX(AMBRA1) complex during the transition from G1 to S cell phase, leading to its degradation. The DCX(AMBRA1) complex represents the major regulator of CCND1 stability during the G1/S transition.

It is found in the nucleus. It localises to the cytoplasm. Its function is as follows. Regulatory component of the cyclin D1-CDK4 (DC) complex that phosphorylates and inhibits members of the retinoblastoma (RB) protein family including RB1 and regulates the cell-cycle during G(1)/S transition. Phosphorylation of RB1 allows dissociation of the transcription factor E2F from the RB/E2F complex and the subsequent transcription of E2F target genes which are responsible for the progression through the G(1) phase. Hypophosphorylates RB1 in early G(1) phase. Cyclin D-CDK4 complexes are major integrators of various mitogenenic and antimitogenic signals. The sequence is that of G1/S-specific cyclin-D1 (ccnd1) from Danio rerio (Zebrafish).